The chain runs to 245 residues: Probable phosphatase YcdX (245 aa).

Zn(2+)-binding residues include His-7, His-9, His-15, His-40, Glu-73, His-101, His-131, Asp-192, and His-194.

Belongs to the PHP family. Homotrimer. It depends on Zn(2+) as a cofactor.

In Escherichia coli O127:H6 (strain E2348/69 / EPEC), this protein is Probable phosphatase YcdX.